Here is a 569-residue protein sequence, read N- to C-terminus: Protein angel homolog 2 (569 aa).

Disordered regions lie at residues 1 to 22 (MRKG…GVSP), 63 to 92 (LQHP…WSSW), and 109 to 155 (GLME…WLRN). Positions 63–72 (LQHPSSSFST) are enriched in polar residues. Residues 139 to 150 (PPKGSRSPKGSP) show a composition bias toward low complexity.

This sequence belongs to the CCR4/nocturin family.

The protein is Protein angel homolog 2 (angel2) of Danio rerio (Zebrafish).